The chain runs to 180 residues: Small ribosomal subunit protein uS5 (180 aa).

The region spanning 24-87 (MIEKLVAVNR…EQARKNLVSV (64 aa)) is the S5 DRBM domain.

This sequence belongs to the universal ribosomal protein uS5 family. Part of the 30S ribosomal subunit. Contacts proteins S4 and S8.

Its function is as follows. With S4 and S12 plays an important role in translational accuracy. Located at the back of the 30S subunit body where it stabilizes the conformation of the head with respect to the body. The protein is Small ribosomal subunit protein uS5 of Stenotrophomonas maltophilia (strain R551-3).